The following is a 171-amino-acid chain: 3-hydroxydecanoyl-[acyl-carrier-protein] dehydratase (171 aa).

The active site involves His-70.

It belongs to the thioester dehydratase family. FabA subfamily. As to quaternary structure, homodimer.

It localises to the cytoplasm. The enzyme catalyses a (3R)-hydroxyacyl-[ACP] = a (2E)-enoyl-[ACP] + H2O. It carries out the reaction (3R)-hydroxydecanoyl-[ACP] = (2E)-decenoyl-[ACP] + H2O. The catalysed reaction is (2E)-decenoyl-[ACP] = (3Z)-decenoyl-[ACP]. It participates in lipid metabolism; fatty acid biosynthesis. Necessary for the introduction of cis unsaturation into fatty acids. Catalyzes the dehydration of (3R)-3-hydroxydecanoyl-ACP to E-(2)-decenoyl-ACP and then its isomerization to Z-(3)-decenoyl-ACP. Can catalyze the dehydratase reaction for beta-hydroxyacyl-ACPs with saturated chain lengths up to 16:0, being most active on intermediate chain length. This is 3-hydroxydecanoyl-[acyl-carrier-protein] dehydratase from Methylococcus capsulatus (strain ATCC 33009 / NCIMB 11132 / Bath).